Consider the following 156-residue polypeptide: Putative thymidylate kinase (156 aa).

7-14 (GLDGTGKT) contributes to the ATP binding site.

Belongs to the thymidylate kinase family.

The enzyme catalyses dTMP + ATP = dTDP + ADP. The protein operates within pyrimidine metabolism; dTTP biosynthesis. In terms of biological role, catalyzes the conversion of dTMP to dTDP. The protein is Putative thymidylate kinase of Acidianus convivator (ABV).